A 370-amino-acid chain; its full sequence is Dual-specificity RNA methyltransferase RlmN (370 aa).

E93 serves as the catalytic Proton acceptor. Residues E99–D337 enclose the Radical SAM core domain. The cysteines at positions 106 and 343 are disulfide-linked. Residues C113, C117, and C120 each coordinate [4Fe-4S] cluster. S-adenosyl-L-methionine-binding positions include G167 to E168, S199, S221 to H223, and N300. Residue C343 is the S-methylcysteine intermediate of the active site.

The protein belongs to the radical SAM superfamily. RlmN family. The cofactor is [4Fe-4S] cluster.

The protein localises to the cytoplasm. It carries out the reaction adenosine(2503) in 23S rRNA + 2 reduced [2Fe-2S]-[ferredoxin] + 2 S-adenosyl-L-methionine = 2-methyladenosine(2503) in 23S rRNA + 5'-deoxyadenosine + L-methionine + 2 oxidized [2Fe-2S]-[ferredoxin] + S-adenosyl-L-homocysteine. The enzyme catalyses adenosine(37) in tRNA + 2 reduced [2Fe-2S]-[ferredoxin] + 2 S-adenosyl-L-methionine = 2-methyladenosine(37) in tRNA + 5'-deoxyadenosine + L-methionine + 2 oxidized [2Fe-2S]-[ferredoxin] + S-adenosyl-L-homocysteine. Functionally, specifically methylates position 2 of adenine 2503 in 23S rRNA and position 2 of adenine 37 in tRNAs. m2A2503 modification seems to play a crucial role in the proofreading step occurring at the peptidyl transferase center and thus would serve to optimize ribosomal fidelity. This chain is Dual-specificity RNA methyltransferase RlmN, found in Francisella tularensis subsp. novicida (strain U112).